The sequence spans 500 residues: Histidine ammonia-lyase (500 aa).

A cross-link (5-imidazolinone (Ala-Gly)) is located at residues 142-144 (ASG). Ser143 carries the post-translational modification 2,3-didehydroalanine (Ser).

The protein belongs to the PAL/histidase family. Post-translationally, contains an active site 4-methylidene-imidazol-5-one (MIO), which is formed autocatalytically by cyclization and dehydration of residues Ala-Ser-Gly.

It is found in the cytoplasm. The enzyme catalyses L-histidine = trans-urocanate + NH4(+). The protein operates within amino-acid degradation; L-histidine degradation into L-glutamate; N-formimidoyl-L-glutamate from L-histidine: step 1/3. This chain is Histidine ammonia-lyase, found in Macrococcus caseolyticus (strain JCSC5402) (Macrococcoides caseolyticum).